The sequence spans 420 residues: Glucose-1-phosphate adenylyltransferase (420 aa).

Residues Y107, G173, 188 to 189, and S206 contribute to the alpha-D-glucose 1-phosphate site; that span reads EK.

This sequence belongs to the bacterial/plant glucose-1-phosphate adenylyltransferase family. As to quaternary structure, homotetramer.

The enzyme catalyses alpha-D-glucose 1-phosphate + ATP + H(+) = ADP-alpha-D-glucose + diphosphate. The protein operates within glycan biosynthesis; glycogen biosynthesis. In terms of biological role, involved in the biosynthesis of ADP-glucose, a building block required for the elongation reactions to produce glycogen. Catalyzes the reaction between ATP and alpha-D-glucose 1-phosphate (G1P) to produce pyrophosphate and ADP-Glc. This chain is Glucose-1-phosphate adenylyltransferase, found in Shewanella baltica (strain OS185).